The sequence spans 817 residues: Coiled-coil domain-containing protein 175 (817 aa).

2 coiled-coil regions span residues 130–166 and 217–594; these read ILEI…ALGI and LQDA…KQEE. The disordered stretch occupies residues 761–817; it reads EEESPSSLSKEDLQKAGMKQKEEKTLRFSPSLHTRRDTLSRNCKMIKKRSRSPKNKP. The segment covering 769 to 786 has biased composition (basic and acidic residues); the sequence is SKEDLQKAGMKQKEEKTL. Basic residues predominate over residues 804–817; it reads KMIKKRSRSPKNKP.

This is Coiled-coil domain-containing protein 175 (Ccdc175) from Rattus norvegicus (Rat).